We begin with the raw amino-acid sequence, 316 residues long: Pantothenate kinase (316 aa).

Residue 95-102 (GSVAVGKS) participates in ATP binding.

Belongs to the prokaryotic pantothenate kinase family.

Its subcellular location is the cytoplasm. It carries out the reaction (R)-pantothenate + ATP = (R)-4'-phosphopantothenate + ADP + H(+). The protein operates within cofactor biosynthesis; coenzyme A biosynthesis; CoA from (R)-pantothenate: step 1/5. In Photorhabdus laumondii subsp. laumondii (strain DSM 15139 / CIP 105565 / TT01) (Photorhabdus luminescens subsp. laumondii), this protein is Pantothenate kinase.